Reading from the N-terminus, the 337-residue chain is Ribosomal RNA small subunit methyltransferase C (337 aa).

Belongs to the methyltransferase superfamily. RsmC family. As to quaternary structure, monomer.

The protein localises to the cytoplasm. The enzyme catalyses guanosine(1207) in 16S rRNA + S-adenosyl-L-methionine = N(2)-methylguanosine(1207) in 16S rRNA + S-adenosyl-L-homocysteine + H(+). In terms of biological role, specifically methylates the guanine in position 1207 of 16S rRNA in the 30S particle. This chain is Ribosomal RNA small subunit methyltransferase C, found in Proteus mirabilis (strain HI4320).